Consider the following 857-residue polypeptide: Protein STICHEL-like 2 (857 aa).

280–287 (GPRGTGKT) provides a ligand contact to ATP. Residues cysteine 299, cysteine 309, cysteine 312, and cysteine 315 each coordinate Zn(2+). Residues 544–576 (LTRHTSEEEMQKLRNALKILSDAEKHLRASKNQ) adopt a coiled-coil conformation. Disordered regions lie at residues 593-629 (SSFATDENGRNQINKDVELSSTSSGCPGDVIKSDAEK) and 787-845 (ASSR…SSRL). Over residues 599–610 (ENGRNQINKDVE) the composition is skewed to basic and acidic residues. Residues 834 to 843 (QSETQNSKSS) are compositionally biased toward polar residues.

Belongs to the DnaX/STICHEL family.

This is Protein STICHEL-like 2 from Arabidopsis thaliana (Mouse-ear cress).